The chain runs to 430 residues: Probable histidine--tRNA ligase, cytoplasmic (430 aa).

This sequence belongs to the class-II aminoacyl-tRNA synthetase family.

It is found in the cytoplasm. It carries out the reaction tRNA(His) + L-histidine + ATP = L-histidyl-tRNA(His) + AMP + diphosphate + H(+). The polypeptide is Probable histidine--tRNA ligase, cytoplasmic (Vairimorpha ceranae (strain BRL01) (Microsporidian parasite)).